The sequence spans 867 residues: Cation/H(+) antiporter 23, chloroplastic (867 aa).

Transmembrane regions (helical) follow at residues 43–63 (SGSTLASSLPFFITQLFVANL), 75–95 (LYLPPFVAQILCGLLFSPSVL), 112–132 (MVLETFANLALVYNIFLLGLG), 146–166 (VIIAFTGLLVALPVGAFLYYL), 175–195 (IISGCVFWSVALACTNFPDLA), 212–232 (AMCAAIVTDLCTWVLLVFGFA), 242–262 (KMMPFVIITTAIFVLLCIFVI), 283–303 (HVWFILGGVVLCGLITDACGV), 336–356 (GILMPLFYIICGLRADIGFML), 362–382 (FMMVVVICSSFLVKIVTTVIT), 393–413 (AFAIGALMNTKGTLSLVVLNA), and 427–447 (HMTIALLVMSLVVEPLLAFAY). Residues 848–867 (SMYEDEDEDDEEDHQYGIHR) are disordered. Positions 851 to 860 (EDEDEDDEED) are enriched in acidic residues.

The protein belongs to the monovalent cation:proton antiporter 2 (CPA2) transporter (TC 2.A.37) family. CHX (TC 2.A.37.4) subfamily. In terms of tissue distribution, specifically expressed in flower buds and pollen. Expressed in leaves, roots and stems.

The protein localises to the plastid. It is found in the chloroplast membrane. The protein resides in the endoplasmic reticulum membrane. In terms of biological role, operates as a K(+)/H(+) antiporter or Na(+)/H(+) antiporter of the chloroplast envelope that functions in pH homeostasis and chloroplast development. Monovalent cation transporter with a preference for Cs(+), K(+) and Rb(+) relative to Na(+) or Li(+). Required for pollen tube guidance, but not for normal pollen development. May also be involved in the development or function of the female gametophyte. The chain is Cation/H(+) antiporter 23, chloroplastic (CHX23) from Arabidopsis thaliana (Mouse-ear cress).